A 234-amino-acid polypeptide reads, in one-letter code: MSGLPIATNLYFDAHFHRHGVKLLPNEFYTTREDMVLVTVLGSCVAACLHDPIGRIGGMNHFMLPDDGADPSAAASESMRYGAYAMEVLINELIKAGGRRERFEAKVFGGAAVLAGMTTINIGDRNADFVRRYLALERIRITAEDLQGVHPRKVAFMPHTGQAMVKKLRVQAPDVAAREAALAREAVDPHGERAPRVRPRVELFGTPAPKAQAKPRIELFGMRAMQPATRKQEA.

This sequence belongs to the CheD family.

The catalysed reaction is L-glutaminyl-[protein] + H2O = L-glutamyl-[protein] + NH4(+). Probably deamidates glutamine residues to glutamate on methyl-accepting chemotaxis receptors (MCPs), playing an important role in chemotaxis. The protein is Probable chemoreceptor glutamine deamidase CheD of Burkholderia pseudomallei (strain 1710b).